The following is a 744-amino-acid chain: Adenosylcobalamin-dependent ribonucleoside-triphosphate reductase (744 aa).

The cysteines at positions 120 and 424 are disulfide-linked. An effector region-1 region spans residues 148-159 (SMPFSFLFDQLM). Positions 169 to 318 (VDENINQIPK…ICNLIGKTVV (150 aa)) are effector region-2. Residues cysteine 413 and glutamate 415 contribute to the active site. An adenosylcobalamin-binding-1 region spans residues 570-631 (FHYSGYLIQR…SDNFASAGTV (62 aa)). The tract at residues 690–729 (LKQAPKEPISKEKYEKADNHITGNVEIVFEQTNEDQKGLE) is adenosylcobalamin-binding-2.

This sequence belongs to the class II ribonucleoside-triphosphate reductase family. In terms of assembly, monomer. Requires adenosylcob(III)alamin as cofactor.

The catalysed reaction is a 2'-deoxyribonucleoside 5'-triphosphate + [thioredoxin]-disulfide + H2O = a ribonucleoside 5'-triphosphate + [thioredoxin]-dithiol. Its activity is regulated as follows. Allosterically regulated by ATP and dNTP. This chain is Adenosylcobalamin-dependent ribonucleoside-triphosphate reductase (rtpR), found in Lactobacillus gasseri (strain ATCC 33323 / DSM 20243 / BCRC 14619 / CIP 102991 / JCM 1131 / KCTC 3163 / NCIMB 11718 / NCTC 13722 / AM63).